We begin with the raw amino-acid sequence, 337 residues long: Peroxidase 14 (337 aa).

The first 22 residues, 1–22 (MARIGSFLILLSLTYALTLCIC), serve as a signal peptide directing secretion. The N-linked (GlcNAc...) asparagine glycan is linked to Asn24. 4 cysteine pairs are disulfide-bonded: Cys44-Cys124, Cys77-Cys82, Cys130-Cys331, and Cys209-Cys241. Catalysis depends on His75, which acts as the Proton acceptor. Ca(2+) is bound by residues Asp76, Val79, Gly81, Asp83, and Ser85. Pro172 serves as a coordination point for substrate. N-linked (GlcNAc...) asparagine glycosylation occurs at Asn191. His202 provides a ligand contact to heme b. Position 203 (Thr203) interacts with Ca(2+). Asn218 and Asn249 each carry an N-linked (GlcNAc...) asparagine glycan. Asp254, Ser257, and Asp262 together coordinate Ca(2+).

Belongs to the peroxidase family. Classical plant (class III) peroxidase subfamily. The cofactor is heme b. Ca(2+) serves as cofactor.

Its subcellular location is the secreted. It carries out the reaction 2 a phenolic donor + H2O2 = 2 a phenolic radical donor + 2 H2O. Functionally, removal of H(2)O(2), oxidation of toxic reductants, biosynthesis and degradation of lignin, suberization, auxin catabolism, response to environmental stresses such as wounding, pathogen attack and oxidative stress. These functions might be dependent on each isozyme/isoform in each plant tissue. The polypeptide is Peroxidase 14 (PER14) (Arabidopsis thaliana (Mouse-ear cress)).